The primary structure comprises 522 residues: Vicilin-like seed storage protein At4g36700 (522 aa).

The N-terminal stretch at 1 to 25 (MTRFAVLPLSVLLLVLLFLCTESLA) is a signal peptide. 5 N-linked (GlcNAc...) asparagine glycosylation sites follow: Asn206, Asn303, Asn341, Asn374, and Asn414. Residues 265–421 (FNVFESEPDF…SLNVSSVTID (157 aa)) enclose the Cupin type-1 domain. The disordered stretch occupies residues 457-522 (DERKRRHDER…EWEMEGEEES (66 aa)). 2 stretches are compositionally biased toward basic and acidic residues: residues 466–491 (RKKEEEEAKREEEERRKREEEEEKKR) and 501–515 (EELRERQLPMEKEWE).

It belongs to the 7S seed storage protein family.

Its function is as follows. Seed storage protein. The chain is Vicilin-like seed storage protein At4g36700 from Arabidopsis thaliana (Mouse-ear cress).